Consider the following 248-residue polypeptide: UPF0246 protein RF_0769 (248 aa).

It belongs to the UPF0246 family.

This is UPF0246 protein RF_0769 from Rickettsia felis (strain ATCC VR-1525 / URRWXCal2) (Rickettsia azadi).